We begin with the raw amino-acid sequence, 121 residues long: Large ribosomal subunit protein bL19 (121 aa).

This sequence belongs to the bacterial ribosomal protein bL19 family.

Functionally, this protein is located at the 30S-50S ribosomal subunit interface and may play a role in the structure and function of the aminoacyl-tRNA binding site. The sequence is that of Large ribosomal subunit protein bL19 from Acidothermus cellulolyticus (strain ATCC 43068 / DSM 8971 / 11B).